Consider the following 414-residue polypeptide: Histidinol dehydrogenase (414 aa).

Tyr-116, Gln-177, and Asn-200 together coordinate NAD(+). 3 residues coordinate substrate: Thr-223, Gln-245, and His-248. Zn(2+) is bound by residues Gln-245 and His-248. Residues Glu-313 and His-314 each act as proton acceptor in the active site. Substrate contacts are provided by His-314, Asp-347, Glu-401, and His-406. Residue Asp-347 coordinates Zn(2+). His-406 is a Zn(2+) binding site.

It belongs to the histidinol dehydrogenase family. The cofactor is Zn(2+).

It catalyses the reaction L-histidinol + 2 NAD(+) + H2O = L-histidine + 2 NADH + 3 H(+). Its pathway is amino-acid biosynthesis; L-histidine biosynthesis; L-histidine from 5-phospho-alpha-D-ribose 1-diphosphate: step 9/9. In terms of biological role, catalyzes the sequential NAD-dependent oxidations of L-histidinol to L-histidinaldehyde and then to L-histidine. The chain is Histidinol dehydrogenase from Staphylococcus epidermidis (strain ATCC 12228 / FDA PCI 1200).